A 211-amino-acid polypeptide reads, in one-letter code: Large ribosomal subunit protein eL13 (211 aa).

N6-acetyllysine is present on lysine 16. Phosphoserine is present on residues serine 52 and serine 77. Glycyl lysine isopeptide (Lys-Gly) (interchain with G-Cter in SUMO2) cross-links involve residues lysine 123 and lysine 145. A Glycyl lysine isopeptide (Lys-Gly) (interchain with G-Cter in SUMO1); alternate cross-link involves residue lysine 174. Glycyl lysine isopeptide (Lys-Gly) (interchain with G-Cter in SUMO2); alternate cross-links involve residues lysine 174 and lysine 177. Lysine 177 carries the N6-acetyllysine; alternate modification.

It belongs to the eukaryotic ribosomal protein eL13 family. Component of the 60S large ribosomal subunit (LSU).

Its subcellular location is the cytoplasm. Its function is as follows. Component of the ribosome, a large ribonucleoprotein complex responsible for the synthesis of proteins in the cell. The small ribosomal subunit (SSU) binds messenger RNAs (mRNAs) and translates the encoded message by selecting cognate aminoacyl-transfer RNA (tRNA) molecules. The large subunit (LSU) contains the ribosomal catalytic site termed the peptidyl transferase center (PTC), which catalyzes the formation of peptide bonds, thereby polymerizing the amino acids delivered by tRNAs into a polypeptide chain. The nascent polypeptides leave the ribosome through a tunnel in the LSU and interact with protein factors that function in enzymatic processing, targeting, and the membrane insertion of nascent chains at the exit of the ribosomal tunnel. As part of the LSU, it is probably required for its formation and the maturation of rRNAs. Plays a role in bone development. This Bos taurus (Bovine) protein is Large ribosomal subunit protein eL13 (RPL13).